Consider the following 340-residue polypeptide: ATPase get3 (340 aa).

Residue 34-41 (KGGVGKTT) coordinates ATP. D63 is an active-site residue. ATP-binding residues include E245 and N272. C283 and C286 together coordinate Zn(2+).

This sequence belongs to the arsA ATPase family. As to quaternary structure, homodimer.

Its subcellular location is the cytoplasm. It localises to the endoplasmic reticulum. ATPase required for the post-translational delivery of tail-anchored (TA) proteins to the endoplasmic reticulum. Recognizes and selectively binds the transmembrane domain of TA proteins in the cytosol. This complex then targets to the endoplasmic reticulum by membrane-bound receptors, where the tail-anchored protein is released for insertion. This process is regulated by ATP binding and hydrolysis. ATP binding drives the homodimer towards the closed dimer state, facilitating recognition of newly synthesized TA membrane proteins. ATP hydrolysis is required for insertion. Subsequently, the homodimer reverts towards the open dimer state, lowering its affinity for the membrane-bound receptor, and returning it to the cytosol to initiate a new round of targeting. The sequence is that of ATPase get3 (get3) from Talaromyces marneffei (strain ATCC 18224 / CBS 334.59 / QM 7333) (Penicillium marneffei).